Consider the following 208-residue polypeptide: UPF0319 protein VSAL_I2129 (208 aa).

The first 21 residues, 1 to 21 (MKFHSFLAAGLCLLTSLSASA), serve as a signal peptide directing secretion.

It belongs to the UPF0319 family.

The protein is UPF0319 protein VSAL_I2129 of Aliivibrio salmonicida (strain LFI1238) (Vibrio salmonicida (strain LFI1238)).